The sequence spans 528 residues: GMP synthase [glutamine-hydrolyzing] (528 aa).

Residues 13–204 (SILILDFGSQ…VYSIAKCKAD (192 aa)) form the Glutamine amidotransferase type-1 domain. The Nucleophile role is filled by C90. Residues H178 and E180 contribute to the active site. One can recognise a GMPS ATP-PPase domain in the interval 205-403 (WTTETFLEET…LGLPDEIIKR (199 aa)). Residue 232–238 (SGGVDSS) coordinates ATP.

Homodimer.

The enzyme catalyses XMP + L-glutamine + ATP + H2O = GMP + L-glutamate + AMP + diphosphate + 2 H(+). It participates in purine metabolism; GMP biosynthesis; GMP from XMP (L-Gln route): step 1/1. Functionally, catalyzes the synthesis of GMP from XMP. In Prochlorococcus marinus subsp. pastoris (strain CCMP1986 / NIES-2087 / MED4), this protein is GMP synthase [glutamine-hydrolyzing].